Here is a 210-residue protein sequence, read N- to C-terminus: Outer-membrane lipoprotein LolB (210 aa).

The N-terminal stretch at 1–19 (MNHLKSFFTALVAGFILTA) is a signal peptide. Cys20 carries N-palmitoyl cysteine lipidation. Cys20 carries the S-diacylglycerol cysteine lipid modification.

The protein belongs to the LolB family. Monomer.

Its subcellular location is the cell outer membrane. Plays a critical role in the incorporation of lipoproteins in the outer membrane after they are released by the LolA protein. The chain is Outer-membrane lipoprotein LolB from Mannheimia succiniciproducens (strain KCTC 0769BP / MBEL55E).